The primary structure comprises 153 residues: Fucose mutarotase (153 aa).

The active-site Proton donor is His-24. Residue Asp-32 coordinates substrate. The active site involves Asp-69. Positions 79, 119, 137, and 139 each coordinate substrate. The active site involves Tyr-119.

The protein belongs to the RbsD / FucU family. Mainly homodimer, but also exists as homotetramer, homooctamer, and homodecamer. The homodimeric form seems catalytically inactive.

It carries out the reaction alpha-L-fucose = beta-L-fucose. The protein operates within carbohydrate metabolism; L-fucose metabolism. Its function is as follows. Involved in the interconversion between alpha- and beta-L-fucoses. L-Fucose (6-deoxy-L-galactose) exists as alpha-L-fucose (29.5%) and beta-L-fucose (70.5%), the beta-form is metabolized through the salvage pathway. GDP-L-fucose formed either by the de novo or salvage pathways is transported into the endoplasmic reticulum, where it serves as a substrate for N- and O-glycosylations by fucosyltransferases. Fucosylated structures expressed on cell surfaces or secreted in biological fluids are believed to play a critical role in cell-cell adhesion and recognition processes. This is Fucose mutarotase (FUOM) from Bos taurus (Bovine).